Reading from the N-terminus, the 465-residue chain is Iron-sulfur cluster assembly SufBD family protein SE_0610 (465 aa).

Belongs to the iron-sulfur cluster assembly SufBD family.

The polypeptide is Iron-sulfur cluster assembly SufBD family protein SE_0610 (Staphylococcus epidermidis (strain ATCC 12228 / FDA PCI 1200)).